The sequence spans 315 residues: Protein LST8 homolog (315 aa).

8 WD repeats span residues 1–31, 33–71, 76–115, 119–158, 161–200, 211–250, 253–292, and 295–315; these read MGDQLILATGGYDHTIKVWQAHTGNCIKTMR, VETSQVNALDRTPDKTRLAACGYQCIRLYDLESNCTAPV, GVQKNVTRLGFQEDGNWMFTAGEDHHVRIWDMISAPPHCS, DCESPVNAACLHPNQVEIGMGSQNGNVFLWDVKSEKHECI, EVDASIQDVAISPDGHYLAAANNKGNCYIWSLCSSPDQKM, AHTRYILRCKFSPDSRLLLTTSGDGTACLWKTSDFSKWRE, IENYWVWDAAFSADSKWLFTASSDGVARLWKLETKTPTRE, and GHTKAITALSFKDEIIRKVNH.

It belongs to the WD repeat LST8 family.

Its subcellular location is the cytoplasm. The protein is Protein LST8 homolog of Drosophila pseudoobscura pseudoobscura (Fruit fly).